A 706-amino-acid chain; its full sequence is Parasporal crystal protein Cry18Aa (706 aa).

Belongs to the delta endotoxin family.

Functionally, binds to the brush border membrane vesicles of scarab larvae and somehow damages the gut wall to allow the vegetative cells of P.popilliae to enter the hemolymph. Active on M.melolontha. This is Parasporal crystal protein Cry18Aa (cry18Aa) from Paenibacillus popilliae (Bacillus popilliae).